The chain runs to 94 residues: MLKPLGDRVLIEVSEEEEKTVGGIVLASTAQEKPQTGKVVAVGPGRTLDNGELATVPVNVGDTVLFEKYAGSEVKYDGQDYMIFSAKDLVAIVE.

This sequence belongs to the GroES chaperonin family. As to quaternary structure, heptamer of 7 subunits arranged in a ring. Interacts with the chaperonin GroEL.

The protein resides in the cytoplasm. Together with the chaperonin GroEL, plays an essential role in assisting protein folding. The GroEL-GroES system forms a nano-cage that allows encapsulation of the non-native substrate proteins and provides a physical environment optimized to promote and accelerate protein folding. GroES binds to the apical surface of the GroEL ring, thereby capping the opening of the GroEL channel. This is Co-chaperonin GroES from Tetragenococcus halophilus (Pediococcus halophilus).